Here is a 313-residue protein sequence, read N- to C-terminus: Protoheme IX farnesyltransferase (313 aa).

Transmembrane regions (helical) follow at residues 22 to 42, 46 to 66, 98 to 118, 121 to 141, 150 to 170, 177 to 197, 223 to 243, 246 to 266, and 284 to 304; these read FALLKPRVMSLVVFTAFVGLM, IGVHPVIGFCAILFIAIGGGA, GEALSLGLALSGLSVIMLALA, VFAGAFLAFTIFFYVVIYTMW, IVIGGAAGAFPPVIGWIAATG, WLMFALTFLWTPPHFWALALF, ILVYTVILAAFALTTAFTSVG, IYLTTAVVLNALFLKGAVQIW, and FFKLSLLYLFLHFGAILAEAL.

Belongs to the UbiA prenyltransferase family. Protoheme IX farnesyltransferase subfamily. Interacts with CtaA.

It is found in the cell inner membrane. The enzyme catalyses heme b + (2E,6E)-farnesyl diphosphate + H2O = Fe(II)-heme o + diphosphate. The protein operates within porphyrin-containing compound metabolism; heme O biosynthesis; heme O from protoheme: step 1/1. Converts heme B (protoheme IX) to heme O by substitution of the vinyl group on carbon 2 of heme B porphyrin ring with a hydroxyethyl farnesyl side group. This Ruegeria sp. (strain TM1040) (Silicibacter sp.) protein is Protoheme IX farnesyltransferase.